Here is a 20-residue protein sequence, read N- to C-terminus: Elastase (20 aa).

The Peptidase S1 domain maps to valine 1 to tyrosine 20.

This sequence belongs to the peptidase S1 family. Elastase subfamily.

Functionally, digests most rapidly at the C-terminal side of alanine residues, but also cleaves at valine and leucine residues. The protein is Elastase of Gadus morhua (Atlantic cod).